Consider the following 63-residue polypeptide: Large ribosomal subunit protein uL29 (63 aa).

It belongs to the universal ribosomal protein uL29 family.

The protein is Large ribosomal subunit protein uL29 of Photorhabdus laumondii subsp. laumondii (strain DSM 15139 / CIP 105565 / TT01) (Photorhabdus luminescens subsp. laumondii).